A 599-amino-acid polypeptide reads, in one-letter code: Elongation factor 4 (599 aa).

The tr-type G domain occupies 2–184 (NHIRNFSIIA…RLVRDIPAPE (183 aa)). Residues 14–19 (DHGKST) and 131–134 (NKID) contribute to the GTP site.

This sequence belongs to the TRAFAC class translation factor GTPase superfamily. Classic translation factor GTPase family. LepA subfamily.

It localises to the cell inner membrane. It carries out the reaction GTP + H2O = GDP + phosphate + H(+). Functionally, required for accurate and efficient protein synthesis under certain stress conditions. May act as a fidelity factor of the translation reaction, by catalyzing a one-codon backward translocation of tRNAs on improperly translocated ribosomes. Back-translocation proceeds from a post-translocation (POST) complex to a pre-translocation (PRE) complex, thus giving elongation factor G a second chance to translocate the tRNAs correctly. Binds to ribosomes in a GTP-dependent manner. The chain is Elongation factor 4 from Yersinia pestis (strain Pestoides F).